Consider the following 90-residue polypeptide: Darcynin 1 (90 aa).

The protein belongs to the darcynin family.

The chain is Darcynin 1 from Acinetobacter baumannii (strain ATCC 17978 / DSM 105126 / CIP 53.77 / LMG 1025 / NCDC KC755 / 5377).